The following is a 481-amino-acid chain: MVNLMRKFAKSIGRPGTEFWRGEDMISALPDHLLCHILIFLSTDESVLTSVLSSRWRNLWKWVPRLDLNTSDFPYPNDVTCAAFIDKFLNLYNESYLREFKLRIDQANFRSNVSLYEPCLGVVIKKPNVRHFQVESDLLEHWCTSEIRLTLSACQALVCLKLHLVWLNDFESLSLPCLKIMYLEDVVFPSDAAAETLISCSPVLEDLKLSLHRDDVVVVLRVYSQSLKSFTLKRAVPVYAINGAHTVLVDTPRLVYMSLIDYQFKSFKIISMSDYVKVDLDVDFELMRDELSERNIVYDLLNNFSGVRNMTISWTTLKFIHRFHDMNPLPKFRDLTRLRATMSSDASLEVLRIVLESCPKLKHFHFTLELVNDFPEAVITGFSRVLPRCLVFSLESVEMESPITEKATELKLVRYFLENSATLKKLVLLLNHESTGEKHEPGVLKQLIESPRRSSLCQFEVLAVPPNPEPWWIYVKPQRFL.

The region spanning 23 to 69 (EDMISALPDHLLCHILIFLSTDESVLTSVLSSRWRNLWKWVPRLDLN) is the F-box domain. 7 LRR repeats span residues 126–153 (KPNVRHFQVESDLLEHWCTSEIRLTLSA), 159–185 (CLKLHLVWLNDFESLSLPCLKIMYLED), 186–211 (VVFPSDAAAETLISCSPVLEDLKLSL), 214–234 (DDVVVVLRVYSQSLKSFTLKR), 236–261 (VPVYAINGAHTVLVDTPRLVYMSLID), 289–314 (DELSERNIVYDLLNNFSGVRNMTISW), and 340–368 (ATMSSDASLEVLRIVLESCPKLKHFHFTL). Residues 378-430 (VITGFSRVLPRCLVFSLESVEMESPITEKATELKLVRYFLENSATLKKLVLLL) enclose the FBD domain.

The chain is F-box/FBD/LRR-repeat protein At5g18770 from Arabidopsis thaliana (Mouse-ear cress).